We begin with the raw amino-acid sequence, 66 residues long: Defensin-like peptide 2/4 (66 aa).

The N-terminal stretch at 1–22 (MRLAYLLLLLVAVLFQAGGGSA) is a signal peptide. Positions 23–24 (KP) are excised as a propeptide. Methionine 26 carries the post-translational modification D-methionine; in form DLP-2. Cystine bridges form between cysteine 33-cysteine 63, cysteine 40-cysteine 56, and cysteine 48-cysteine 64.

Post-translationally, stereoinversion of L-Met-26 (in DLP-4) to D-Met-26 (in DLP-2). As to expression, produced by the crural gland and detected in venom from the spur located on each male hind leg. Is also widely expressed in both male and female tissues, including brain, intestine, kidney, lung, spleen and testis.

The protein localises to the secreted. Functionally, does not show antimicrobial, myotoxic, hemolytic and cell-promoting activities. The chain is Defensin-like peptide 2/4 from Ornithorhynchus anatinus (Duckbill platypus).